A 221-amino-acid polypeptide reads, in one-letter code: NEDD4 family-interacting protein 1 (221 aa).

Ala-2 is subject to N-acetylalanine. The interval 2–41 is interaction with UBE2L3; the sequence is ALALAALAAVEPACGSRYQQLQNEEESGEPEQAAGDAPPP. Over 2–116 the chain is Cytoplasmic; that stretch reads ALALAALAAV…ADQLRIGNDG (115 aa). Positions 18–45 are disordered; it reads RYQQLQNEEESGEPEQAAGDAPPPYSSI. 3 short sequence motifs (PPxY motif) span residues 39–42, 64–67, and 74–76; these read PPPY, PPSY, and PSY. An interaction with ITCH region spans residues 42 to 76; sequence YSSISAESAAYFDYKDESGFPKPPSYNVATTLPSY. Residues 117–137 form a helical membrane-spanning segment; the sequence is IFMLTFFMAFLFNWIGFFLSF. Topologically, residues 138–143 are extracellular; it reads CLTTSA. A helical membrane pass occupies residues 144 to 164; that stretch reads AGRYGAISGFGLSLIKWILIV. At 165–172 the chain is on the cytoplasmic side; that stretch reads RFSTYFPG. Residues 173-193 traverse the membrane as a helical segment; it reads YFDGQYWLWWVFLVLGFLLFL. Residues 194–221 lie on the Extracellular side of the membrane; that stretch reads RGFINYAKVRKMPETFSNLPRTRVLFIY.

As to quaternary structure, forms heterodimers with NDFIP2. Interacts with several E3 ubiquitin-protein ligases, including ITCH, NEDD4, NEDD4L and WWP2. The interaction with NEDD4, NEDD4L and ITCH leads to relocalization of these proteins to exosomes and eventually to exosomal secretion. Interacts with U2SURP. Interacts with SLC11A2/DMT1. Interacts with PTEN. May interact with phosphorylated EGFR. Interacts with BRAT1. Interacts with KCNH2. Interacts with MAVS. Part of a complex containing ITCH, NDFIP1 and MAP3K7. Interacts (via N-terminus) with UBE2L3; the interaction mediates recruitment of UBE2L3 to ITCH. Ubiquitinated by NEDD4 and ITCH; mono-, di- and polyubiquitinated forms are detected. Ubiquitination regulates its degradation. In terms of processing, undergoes transient tyrosine phosphorylation following EGF stimulation, most probably by catalyzed by SRC. Phosphorylation SRC is enhanced in the presence of NDFIP2 which may act as a scaffold to recruit SRC to NDFIP1. As to expression, widely expressed. Higher levels are detected in cerebellum, pituitary, thalamus, kidney, liver, testis, salivary glands and placenta. Also expressed in fetal brain, kidney and lung.

It localises to the endosome membrane. It is found in the golgi apparatus membrane. Its subcellular location is the synapse. The protein resides in the synaptosome. The protein localises to the cell projection. It localises to the dendrite. It is found in the secreted. Its function is as follows. Activates HECT domain-containing E3 ubiquitin-protein ligases, including NEDD4 and ITCH, and consequently modulates the stability of their targets. As a result, controls many cellular processes. Prevents chronic T-helper cell-mediated inflammation by activating ITCH and thus controlling JUNB degradation. Promotes pancreatic beta cell death through degradation of JUNB and inhibition of the unfolded protein response, leading to reduction of insulin secretion. Restricts the production of pro-inflammatory cytokines in effector Th17 T-cells by promoting ITCH-mediated ubiquitination and degradation of RORC. Together with NDFIP2, limits the cytokine signaling and expansion of effector Th2 T-cells by promoting degradation of JAK1, probably by ITCH- and NEDD4L-mediated ubiquitination. Regulates peripheral T-cell tolerance to self and foreign antigens, forcing the exit of naive CD4+ T-cells from the cell cycle before they become effector T-cells. Negatively regulates RLR-mediated antiviral response by promoting SMURF1-mediated ubiquitination and subsequent degradation of MAVS. Negatively regulates KCNH2 potassium channel activity by decreasing its cell-surface expression and interfering with channel maturation through recruitment of NEDD4L to the Golgi apparatus where it mediates KCNH2 degradation. In cortical neurons, mediates the ubiquitination of the divalent metal transporter SLC11A2/DMT1 by NEDD4L, leading to its down-regulation and protection of the cells from cobalt and iron toxicity. Important for normal development of dendrites and dendritic spines in cortex. Enhances the ubiquitination of BRAT1 mediated by: NEDD4, NEDD4L and ITCH and is required for the nuclear localization of ubiquitinated BRAT1. Enhances the ITCH-mediated ubiquitination of MAP3K7 by recruiting E2 ubiquitin-conjugating enzyme UBE2L3 to ITCH. Modulates EGFR signaling through multiple pathways. In particular, may regulate the ratio of AKT1-to-MAPK8 signaling in response to EGF, acting on AKT1 probably through PTEN destabilization and on MAPK8 through ITCH-dependent MAP2K4 inactivation. As a result, may control cell growth rate. Inhibits cell proliferation by promoting PTEN nuclear localization and changing its signaling specificity. This chain is NEDD4 family-interacting protein 1 (NDFIP1), found in Homo sapiens (Human).